Reading from the N-terminus, the 258-residue chain is Acetylglutamate kinase (258 aa).

Residues 41–42, arginine 63, and asparagine 156 each bind substrate; that span reads GG.

This sequence belongs to the acetylglutamate kinase family. ArgB subfamily. In terms of assembly, homodimer.

The protein localises to the cytoplasm. The catalysed reaction is N-acetyl-L-glutamate + ATP = N-acetyl-L-glutamyl 5-phosphate + ADP. It participates in amino-acid biosynthesis; L-arginine biosynthesis; N(2)-acetyl-L-ornithine from L-glutamate: step 2/4. In terms of biological role, catalyzes the ATP-dependent phosphorylation of N-acetyl-L-glutamate. This is Acetylglutamate kinase from Geobacillus stearothermophilus (Bacillus stearothermophilus).